A 217-amino-acid polypeptide reads, in one-letter code: Phosphatidylserine decarboxylase proenzyme (217 aa).

The active-site Schiff-base intermediate with substrate; via pyruvic acid is the serine 182. Serine 182 is subject to Pyruvic acid (Ser); by autocatalysis.

It belongs to the phosphatidylserine decarboxylase family. PSD-A subfamily. As to quaternary structure, heterodimer of a large membrane-associated beta subunit and a small pyruvoyl-containing alpha subunit. Pyruvate is required as a cofactor. In terms of processing, is synthesized initially as an inactive proenzyme. Formation of the active enzyme involves a self-maturation process in which the active site pyruvoyl group is generated from an internal serine residue via an autocatalytic post-translational modification. Two non-identical subunits are generated from the proenzyme in this reaction, and the pyruvate is formed at the N-terminus of the alpha chain, which is derived from the carboxyl end of the proenzyme. The post-translation cleavage follows an unusual pathway, termed non-hydrolytic serinolysis, in which the side chain hydroxyl group of the serine supplies its oxygen atom to form the C-terminus of the beta chain, while the remainder of the serine residue undergoes an oxidative deamination to produce ammonia and the pyruvoyl prosthetic group on the alpha chain.

The protein localises to the cell membrane. It catalyses the reaction a 1,2-diacyl-sn-glycero-3-phospho-L-serine + H(+) = a 1,2-diacyl-sn-glycero-3-phosphoethanolamine + CO2. It functions in the pathway phospholipid metabolism; phosphatidylethanolamine biosynthesis; phosphatidylethanolamine from CDP-diacylglycerol: step 2/2. In terms of biological role, catalyzes the formation of phosphatidylethanolamine (PtdEtn) from phosphatidylserine (PtdSer). The sequence is that of Phosphatidylserine decarboxylase proenzyme from Prosthecochloris aestuarii (strain DSM 271 / SK 413).